The following is a 441-amino-acid chain: Dolichyl-diphosphooligosaccharide--protein glycosyltransferase 48 kDa subunit (441 aa).

The N-terminal stretch at 1–28 (MATALSGGFSKNALFILSAALMLQAVLG) is a signal peptide. Over 29-410 (DGKTLVLLDN…TQYERFIPSA (382 aa)) the chain is Lumenal. Residues 411–431 (FPYYASAFSMMAGLFVFSVVF) form a helical membrane-spanning segment. The Cytoplasmic segment spans residues 432–441 (LHMREKEKSD).

This sequence belongs to the DDOST 48 kDa subunit family. As to quaternary structure, component of the oligosaccharyltransferase (OST) complex.

The protein resides in the endoplasmic reticulum membrane. It participates in protein modification; protein glycosylation. In terms of biological role, subunit of the oligosaccharyl transferase (OST) complex that catalyzes the initial transfer of a defined glycan (Glc(3)Man(9)GlcNAc(2) in eukaryotes) from the lipid carrier dolichol-pyrophosphate to an asparagine residue within an Asn-X-Ser/Thr consensus motif in nascent polypeptide chains, the first step in protein N-glycosylation. N-glycosylation occurs cotranslationally and the complex associates with the Sec61 complex at the channel-forming translocon complex that mediates protein translocation across the endoplasmic reticulum (ER). All subunits are required for a maximal enzyme activity. Required for the assembly of both SST3A- and SS3B-containing OST complexes. In Danio rerio (Zebrafish), this protein is Dolichyl-diphosphooligosaccharide--protein glycosyltransferase 48 kDa subunit.